Consider the following 140-residue polypeptide: Required for drug-induced death protein 1 (140 aa).

Residues 1-95 (MTVGARLRSK…DKPKKRYRRK (95 aa)) form a disordered region. A compositionally biased stretch (acidic residues) spans 29–53 (EETDAIVEHLEGEDEDPESQDCERE). A helical membrane pass occupies residues 118–140 (LQGFAAAYSAPFGVATSVVSFVR).

Its subcellular location is the membrane. In terms of biological role, regulates drug efflux through modulation of ABCB1 localization and activity. The polypeptide is Required for drug-induced death protein 1 (Rattus norvegicus (Rat)).